The sequence spans 557 residues: Selenoprotein N (557 aa).

Residues 1 to 24 (MGQARPAARRPHSPDPGAQPAPPR) form a disordered region. The signal sequence occupies residues 1-42 (MGQARPAARRPHSPDPGAQPAPPRRRARALALLGALLAAAAA). One can recognise an EF-hand domain in the interval 67–102 (VLGTDGLFLFSSLDTDQDMYISPEEFKPIAEKLTGS). N-linked (GlcNAc...) asparagine glycosylation is present at N156. A non-standard amino acid (selenocysteine) is located at residue U428. N-linked (GlcNAc...) asparagine glycosylation is found at N449 and N497.

As to quaternary structure, interacts with RYR1, RYR2 and RYR3. Post-translationally, N-glycosylated.

The protein resides in the endoplasmic reticulum membrane. Functionally, plays an important role in cell protection against oxidative stress and in the regulation of redox-related calcium homeostasis. Regulates the calcium level of the ER by protecting the calcium pump ATP2A2 against the oxidoreductase ERO1A-mediated oxidative damage. Within the ER, ERO1A activity increases the concentration of H(2)O(2), which attacks the luminal thiols in ATP2A2 and thus leads to cysteinyl sulfenic acid formation (-SOH) and SEPN1 reduces the SOH back to free thiol (-SH), thus restoring ATP2A2 activity. Acts as a modulator of ryanodine receptor (RyR) activity: protects RyR from oxidation due to increased oxidative stress, or directly controls the RyR redox state, regulating the RyR-mediated calcium mobilization required for normal muscle development and differentiation. Essential for muscle regeneration and satellite cell maintenance in skeletal muscle. This chain is Selenoprotein N, found in Mus musculus (Mouse).